Reading from the N-terminus, the 206-residue chain is Large ribosomal subunit protein uL13 (206 aa).

This sequence belongs to the universal ribosomal protein uL13 family.

The protein is Large ribosomal subunit protein uL13 (RPL13A) of Picea mariana (Black spruce).